The primary structure comprises 719 residues: Protein Hook homolog 2 (719 aa).

The segment at 1 to 161 (MSVDKAELCG…ELMTKDTPDS (161 aa)) is required for localization to the centrosome and induction of aggresome formation. Residues 1–548 (MSVDKAELCG…LKRKLEEHLQ (548 aa)) form a sufficient for interaction with microtubules region. The Calponin-homology (CH) domain occupies 6–122 (AELCGSLLTW…KLLQLVLGCA (117 aa)). Phosphoserine is present on S163. 2 coiled-coil regions span residues 180–427 (LSEE…AQLQ) and 455–607 (AELR…VDKA). T230 is modified (phosphothreonine). Residues 533–719 (DAISILLKRK…SLNLRPTDKH (187 aa)) form a required for localization to the centrosome and induction of aggresome formation region. A sufficient for interaction with CNTRL region spans residues 584 to 719 (HNLQKKDADL…SLNLRPTDKH (136 aa)). The disordered stretch occupies residues 696–719 (LATNSRRGPLGRLASLNLRPTDKH). At S710 the chain carries Phosphoserine.

Belongs to the hook family. Self-associates. Component of the FTS/Hook/FHIP complex (FHF complex), composed of AKTIP/FTS, FHIP1B, and one or more members of the Hook family of proteins HOOK1, HOOK2, and HOOK3. May interact directly with AKTIP/FTS, HOOK1 and HOOK3. Associates with several subunits of the homotypic vesicular sorting complex (the HOPS complex) including VPS16 and VPS41; these interactions may be indirect. Interacts with CNTRL. Interacts with microtubules. Interacts with ZC3H14. Interacts with LRGUK (via guanylate kinase-like domain). Interacts with CCDC181. Interacts with AP4M1; the interaction is direct, mediates the interaction between FTS-Hook-FHIP (FHF) complex and AP-4 and the perinuclear distribution of AP-4.

The protein localises to the cytoplasm. Its subcellular location is the cytoskeleton. The protein resides in the microtubule organizing center. It localises to the centrosome. It is found in the golgi apparatus. The protein localises to the trans-Golgi network. Component of the FTS/Hook/FHIP complex (FHF complex). The FHF complex may function to promote vesicle trafficking and/or fusion via the homotypic vesicular protein sorting complex (the HOPS complex). Contributes to the establishment and maintenance of centrosome function. May function in the positioning or formation of aggresomes, which are pericentriolar accumulations of misfolded proteins, proteasomes and chaperones. FHF complex promotes the distribution of AP-4 complex to the perinuclear area of the cell. The chain is Protein Hook homolog 2 (HOOK2) from Homo sapiens (Human).